The chain runs to 35 residues: U5-ctenitoxin-Co1a (35 aa).

Cystine bridges form between Cys-4–Cys-18, Cys-11–Cys-24, Cys-17–Cys-32, and Cys-26–Cys-30.

As to expression, expressed by the venom gland.

Its subcellular location is the secreted. Blocks voltage-gated sodium channels (Nav). This is U5-ctenitoxin-Co1a from Ctenus ornatus (Brazilian spider).